The chain runs to 424 residues: Neurotensin receptor type 1 (424 aa).

At 1 to 67 (MHLNSSVQQG…TDIYSKVLVT (67 aa)) the chain is on the extracellular side. 3 N-linked (GlcNAc...) asparagine glycosylation sites follow: N4, N38, and N42. A helical transmembrane segment spans residues 68 to 88 (AVYLALFVVGTVGNSVTAFTL). Residues 89–102 (ARKKSLQSLQSTVH) lie on the Cytoplasmic side of the membrane. The chain crosses the membrane as a helical span at residues 103–122 (YHLGSLALSDLLILLLAMPV). At 123 to 142 (ELYNFIWVHHPWAFGDAGCR) the chain is on the extracellular side. Cysteines 141 and 224 form a disulfide. The helical transmembrane segment at 143–164 (GYYFLRDACTYATALNVASLSV) threads the bilayer. Residues 165–184 (ERYLAICHPFKAKTLMSRSR) lie on the Cytoplasmic side of the membrane. The helical transmembrane segment at 185–205 (TKKFISAIWLASALLAVPMLF) threads the bilayer. Over 206–234 (TMGLQNRSADGQHPGGLVCTPTVDTATVK) the chain is Extracellular. N211 carries an N-linked (GlcNAc...) asparagine glycan. The helical transmembrane segment at 235 to 259 (VVIQVNTFMSFLFPMLIISILNTVI) threads the bilayer. At 260–308 (ANKLTVMVHQAAEQGRGVCTVGTHNSLEHSTFNMSIEPGRVQALRHGVL) the chain is on the cytoplasmic side. The helical transmembrane segment at 309-330 (VLRAVVIAFVVCWLPYHVRRLM) threads the bilayer. The neurotensin binding stretch occupies residues 326-349 (VRRLMFCYISDEQWTTFLFDFYHY). Residues 331-348 (FCYISDEQWTTFLFDFYH) are Extracellular-facing. The chain crosses the membrane as a helical span at residues 349-369 (YFYMLTNALFYVSSAINPILY). At 370 to 424 (NLVSANFRQVFLSTLACLCPGWRRRRKKRPTFSRKPNSMSSNHAFSTSATRETLY) the chain is on the cytoplasmic side. Residues C386 and C388 are each lipidated (S-palmitoyl cysteine). A disordered region spans residues 398–424 (RPTFSRKPNSMSSNHAFSTSATRETLY). Polar residues predominate over residues 403–424 (RKPNSMSSNHAFSTSATRETLY).

It belongs to the G-protein coupled receptor 1 family. Neurotensin receptor subfamily. NTSR1 sub-subfamily. In terms of assembly, interacts (palmitoylated form) with GNA11. In terms of processing, N-glycosylated. Palmitoylated; this is required for normal localization at membrane rafts and normal GNA11-mediated activation of down-stream signaling cascades. The palmitoylation level increases in response to neurotensin treatment.

The protein resides in the cell membrane. The protein localises to the membrane raft. In terms of biological role, G-protein coupled receptor for the tridecapeptide neurotensin (NTS). Signaling is effected via G proteins that activate a phosphatidylinositol-calcium second messenger system. Signaling leads to the activation of downstream MAP kinases and protects cells against apoptosis. The sequence is that of Neurotensin receptor type 1 (Ntsr1) from Mus musculus (Mouse).